The primary structure comprises 79 residues: MFVKTGDKVKVIAGSEKGKEGTVLSVNVKENRVVVKGVNMIKKATKASASNANGGVVETEGSIHASNVKVIAKAESNKD.

It belongs to the universal ribosomal protein uL24 family. As to quaternary structure, part of the 50S ribosomal subunit.

Functionally, one of two assembly initiator proteins, it binds directly to the 5'-end of the 23S rRNA, where it nucleates assembly of the 50S subunit. In terms of biological role, one of the proteins that surrounds the polypeptide exit tunnel on the outside of the subunit. The sequence is that of Large ribosomal subunit protein uL24 from Lactobacillus delbrueckii subsp. bulgaricus (strain ATCC 11842 / DSM 20081 / BCRC 10696 / JCM 1002 / NBRC 13953 / NCIMB 11778 / NCTC 12712 / WDCM 00102 / Lb 14).